A 70-amino-acid polypeptide reads, in one-letter code: Exodeoxyribonuclease 7 small subunit (70 aa).

Belongs to the XseB family. In terms of assembly, heterooligomer composed of large and small subunits.

The protein resides in the cytoplasm. The catalysed reaction is Exonucleolytic cleavage in either 5'- to 3'- or 3'- to 5'-direction to yield nucleoside 5'-phosphates.. Functionally, bidirectionally degrades single-stranded DNA into large acid-insoluble oligonucleotides, which are then degraded further into small acid-soluble oligonucleotides. This chain is Exodeoxyribonuclease 7 small subunit, found in Streptococcus pneumoniae serotype 2 (strain D39 / NCTC 7466).